The following is a 992-amino-acid chain: Ankyrin repeat domain-containing protein 18A (992 aa).

5 ANK repeats span residues 67 to 96, 100 to 129, 133 to 162, 166 to 195, and 199 to 228; these read KDRTVLHLACAHGRVQVVTLLLHRRCQIDI, LNRTPLMKAVHSQEEACAIVLLECGANPNI, YGNTALHYAVYNKGTSLAERLLSHHANIEA, EGNTPLLFAINSRRQHMVEFLLKNQANIHA, and FKRTALILAVQHNLSSIVTLLLQQNIRISS. The disordered stretch occupies residues 262–320; that stretch reads NHLRNDNQETAAMKPANLKKRKERAKAEHNLKVASEEKQERLQRSENKQPQDSQSYGKK. Coiled-coil stretches lie at residues 278–310, 378–618, 683–713, and 743–899; these read NLKKRKERAKAEHNLKVASEEKQERLQRSENKQ, KMIT…AERE, ISLLNYTADQIRKKNRELEEEATGYKKCLEM, and FKKL…EAFA. Basic and acidic residues predominate over residues 286 to 310; it reads AKAEHNLKVASEEKQERLQRSENKQ.

The sequence is that of Ankyrin repeat domain-containing protein 18A (ANKRD18A) from Homo sapiens (Human).